The primary structure comprises 195 residues: Glycerol-3-phosphate acyltransferase (195 aa).

5 helical membrane-spanning segments follow: residues 7–27, 52–72, 80–100, 113–133, and 147–167; these read IFIL…SYVI, LALL…AIAQ, ILFL…YLFF, LIFI…ICFL, and LIAL…IFTI.

This sequence belongs to the PlsY family. Probably interacts with PlsX.

It localises to the cell inner membrane. The enzyme catalyses an acyl phosphate + sn-glycerol 3-phosphate = a 1-acyl-sn-glycero-3-phosphate + phosphate. The protein operates within lipid metabolism; phospholipid metabolism. Catalyzes the transfer of an acyl group from acyl-phosphate (acyl-PO(4)) to glycerol-3-phosphate (G3P) to form lysophosphatidic acid (LPA). This enzyme utilizes acyl-phosphate as fatty acyl donor, but not acyl-CoA or acyl-ACP. The protein is Glycerol-3-phosphate acyltransferase of Ehrlichia ruminantium (strain Welgevonden).